Here is a 233-residue protein sequence, read N- to C-terminus: Pre-hexon-linking protein VIII (233 aa).

Thr64 carries the phosphothreonine; by host modification. A propeptide spanning residues 112–163 is cleaved from the precursor; it reads ARHVRFRDRPSPYSSGSIKRLIIRGRGIQLNDEVVSSSTGPRPDGVFQLGGA. The residue at position 180 (Ser180) is a Phosphoserine; by host.

Belongs to the adenoviridae hexon-linking protein family. Interacts with the peripentonal hexons as well as the hexons in the facets. Part of a complex composed of the core-capsid bridging protein, the endosome lysis protein VI and the hexon-linking protein VIII; these interactions bridge the virus core to the capsid. Post-translationally, cleaved by the viral protease during virion maturation. May cause the middle segment to be shed from the capsid.

It localises to the virion. The protein resides in the host nucleus. In terms of biological role, structural component of the virion that acts as a cement protein on the capsid interior and which glue the peripentonal hexons and group-of-nine hexons together. The sequence is that of Pre-hexon-linking protein VIII from Homo sapiens (Human).